Reading from the N-terminus, the 396-residue chain is Phosphopentomutase (396 aa).

D13, D288, H293, D329, H330, and H341 together coordinate Mn(2+).

Belongs to the phosphopentomutase family. The cofactor is Mn(2+).

Its subcellular location is the cytoplasm. It catalyses the reaction 2-deoxy-alpha-D-ribose 1-phosphate = 2-deoxy-D-ribose 5-phosphate. It carries out the reaction alpha-D-ribose 1-phosphate = D-ribose 5-phosphate. Its pathway is carbohydrate degradation; 2-deoxy-D-ribose 1-phosphate degradation; D-glyceraldehyde 3-phosphate and acetaldehyde from 2-deoxy-alpha-D-ribose 1-phosphate: step 1/2. Functionally, isomerase that catalyzes the conversion of deoxy-ribose 1-phosphate (dRib-1-P) and ribose 1-phosphate (Rib-1-P) to deoxy-ribose 5-phosphate (dRib-5-P) and ribose 5-phosphate (Rib-5-P), respectively. The protein is Phosphopentomutase of Clostridium botulinum (strain Alaska E43 / Type E3).